A 212-amino-acid polypeptide reads, in one-letter code: uncharacterized protein (212 aa).

The first 18 residues, M1 to G18, serve as a signal peptide directing secretion. The chain crosses the membrane as a helical span at residues I186 to V208.

It to A.fulgidus AF_0540.

It localises to the membrane. This is an uncharacterized protein from Archaeoglobus fulgidus (strain ATCC 49558 / DSM 4304 / JCM 9628 / NBRC 100126 / VC-16).